Reading from the N-terminus, the 219-residue chain is Large ribosomal subunit protein uL3 (219 aa).

The interval 136 to 156 (GASHGAHRNHRKPGSIGGCAT) is disordered.

It belongs to the universal ribosomal protein uL3 family. In terms of assembly, part of the 50S ribosomal subunit. Forms a cluster with proteins L14 and L19.

Its function is as follows. One of the primary rRNA binding proteins, it binds directly near the 3'-end of the 23S rRNA, where it nucleates assembly of the 50S subunit. The protein is Large ribosomal subunit protein uL3 of Kineococcus radiotolerans (strain ATCC BAA-149 / DSM 14245 / SRS30216).